We begin with the raw amino-acid sequence, 282 residues long: Proteasome subunit beta (282 aa).

A propeptide spans 1 to 54 (MGSHRDLPAGMVNHIFTNSGISSFTEFVGSYAPDLLPGRNETLAAPVGDRIPHA) (removed in mature form; by autocatalysis). The Nucleophile role is filled by T55.

This sequence belongs to the peptidase T1B family. In terms of assembly, the 20S proteasome core is composed of 14 alpha and 14 beta subunits that assemble into four stacked heptameric rings, resulting in a barrel-shaped structure. The two inner rings, each composed of seven catalytic beta subunits, are sandwiched by two outer rings, each composed of seven alpha subunits. The catalytic chamber with the active sites is on the inside of the barrel. Has a gated structure, the ends of the cylinder being occluded by the N-termini of the alpha-subunits. Is capped by the proteasome-associated ATPase, ARC.

The protein localises to the cytoplasm. The catalysed reaction is Cleavage of peptide bonds with very broad specificity.. It functions in the pathway protein degradation; proteasomal Pup-dependent pathway. Its activity is regulated as follows. The formation of the proteasomal ATPase ARC-20S proteasome complex, likely via the docking of the C-termini of ARC into the intersubunit pockets in the alpha-rings, may trigger opening of the gate for substrate entry. Interconversion between the open-gate and close-gate conformations leads to a dynamic regulation of the 20S proteasome proteolysis activity. Component of the proteasome core, a large protease complex with broad specificity involved in protein degradation. This Streptosporangium roseum (strain ATCC 12428 / DSM 43021 / JCM 3005 / KCTC 9067 / NCIMB 10171 / NRRL 2505 / NI 9100) protein is Proteasome subunit beta.